Consider the following 305-residue polypeptide: Cytochrome c biogenesis protein CcsA (305 aa).

8 helical membrane passes run 11-31 (GLGFGAFLLLLLALPLAFWAV), 37-57 (TGIVQLLVALANLLLTSQLVL), 63-83 (GHFPISNLYESLCFLAWACTL), 96-116 (IVAAAATPMGLGCIAFASFAL), 141-161 (VIMVSYAALLVGSLLSLAVLL), 212-232 (TITVGFLMLTVGIVSGAVWAN), 246-263 (TWALICWLVYAAYLHTRL), and 275-295 (VAVVGLVVIAVCYIGVNLLGI).

It belongs to the CcmF/CycK/Ccl1/NrfE/CcsA family. As to quaternary structure, may interact with ccs1.

The protein localises to the cellular thylakoid membrane. Functionally, required during biogenesis of c-type cytochromes (cytochrome c6 and cytochrome f) at the step of heme attachment. The chain is Cytochrome c biogenesis protein CcsA from Parasynechococcus marenigrum (strain WH8102).